The primary structure comprises 299 residues: ATP phosphoribosyltransferase (299 aa).

This sequence belongs to the ATP phosphoribosyltransferase family. Long subfamily. Equilibrium between an active dimeric form, an inactive hexameric form and higher aggregates. Interconversion between the various forms is largely reversible and is influenced by the natural substrates and inhibitors of the enzyme. It depends on Mg(2+) as a cofactor.

The protein localises to the cytoplasm. It catalyses the reaction 1-(5-phospho-beta-D-ribosyl)-ATP + diphosphate = 5-phospho-alpha-D-ribose 1-diphosphate + ATP. It participates in amino-acid biosynthesis; L-histidine biosynthesis; L-histidine from 5-phospho-alpha-D-ribose 1-diphosphate: step 1/9. Its activity is regulated as follows. Feedback inhibited by histidine. Its function is as follows. Catalyzes the condensation of ATP and 5-phosphoribose 1-diphosphate to form N'-(5'-phosphoribosyl)-ATP (PR-ATP). Has a crucial role in the pathway because the rate of histidine biosynthesis seems to be controlled primarily by regulation of HisG enzymatic activity. This Escherichia coli O81 (strain ED1a) protein is ATP phosphoribosyltransferase.